We begin with the raw amino-acid sequence, 1053 residues long: Carbamoyl phosphate synthase large chain (1053 aa).

Positions 1 to 397 are carboxyphosphate synthetic domain; it reads MPKNTSLKKV…GFKKALRSLD (397 aa). ATP is bound by residues Arg127, Arg167, Gly173, Gly174, Glu206, Val208, Glu213, Gly239, Val240, His241, Gln282, and Glu294. One can recognise an ATP-grasp 1 domain in the interval 131 to 323; sequence KKLMLEIGEP…IARVAAKVAI (193 aa). Mg(2+) is bound by residues Gln282, Glu294, and Asn296. Positions 282, 294, and 296 each coordinate Mn(2+). The segment at 398–530 is oligomerization domain; the sequence is TDIYRHTDLN…YSTWEQECEL (133 aa). The carbamoyl phosphate synthetic domain stretch occupies residues 531–919; that stretch reads TQSDRKKILI…YKASQAADNT (389 aa). An ATP-grasp 2 domain is found at 661-852; it reads SVLLDQNNIP…LAKIAAKLML (192 aa). Arg697, Arg736, Leu738, Glu743, Gly768, Val769, His770, Ser771, Gln811, and Glu823 together coordinate ATP. Gln811, Glu823, and Asn825 together coordinate Mg(2+). Mn(2+) is bound by residues Gln811, Glu823, and Asn825. The 136-residue stretch at 918 to 1053 folds into the MGS-like domain; the sequence is NTIPLKGNVF…TVEPLSHYHS (136 aa). The interval 920–1053 is allosteric domain; that stretch reads IPLKGNVFIS…TVEPLSHYHS (134 aa).

It belongs to the CarB family. Composed of two chains; the small (or glutamine) chain promotes the hydrolysis of glutamine to ammonia, which is used by the large (or ammonia) chain to synthesize carbamoyl phosphate. Tetramer of heterodimers (alpha,beta)4. It depends on Mg(2+) as a cofactor. Mn(2+) is required as a cofactor.

It carries out the reaction hydrogencarbonate + L-glutamine + 2 ATP + H2O = carbamoyl phosphate + L-glutamate + 2 ADP + phosphate + 2 H(+). It catalyses the reaction hydrogencarbonate + NH4(+) + 2 ATP = carbamoyl phosphate + 2 ADP + phosphate + 2 H(+). It participates in amino-acid biosynthesis; L-arginine biosynthesis; carbamoyl phosphate from bicarbonate: step 1/1. The protein operates within pyrimidine metabolism; UMP biosynthesis via de novo pathway; (S)-dihydroorotate from bicarbonate: step 1/3. In terms of biological role, large subunit of the glutamine-dependent carbamoyl phosphate synthetase (CPSase). CPSase catalyzes the formation of carbamoyl phosphate from the ammonia moiety of glutamine, carbonate, and phosphate donated by ATP, constituting the first step of 2 biosynthetic pathways, one leading to arginine and/or urea and the other to pyrimidine nucleotides. The large subunit (synthetase) binds the substrates ammonia (free or transferred from glutamine from the small subunit), hydrogencarbonate and ATP and carries out an ATP-coupled ligase reaction, activating hydrogencarbonate by forming carboxy phosphate which reacts with ammonia to form carbamoyl phosphate. In Methanocorpusculum labreanum (strain ATCC 43576 / DSM 4855 / Z), this protein is Carbamoyl phosphate synthase large chain.